Reading from the N-terminus, the 519-residue chain is 3-octaprenyl-4-hydroxybenzoate carboxy-lyase (519 aa).

Asn-177 is a binding site for Mn(2+). Residues 180–182 (IYR), 194–196 (RWL), and 199–200 (RG) contribute to the prenylated FMN site. A Mn(2+)-binding site is contributed by Glu-243. Asp-318 functions as the Proton donor in the catalytic mechanism.

This sequence belongs to the UbiD family. Homohexamer. Requires prenylated FMN as cofactor. Mn(2+) serves as cofactor.

The protein resides in the cell membrane. It carries out the reaction a 4-hydroxy-3-(all-trans-polyprenyl)benzoate + H(+) = a 2-(all-trans-polyprenyl)phenol + CO2. Its pathway is cofactor biosynthesis; ubiquinone biosynthesis. Catalyzes the decarboxylation of 3-octaprenyl-4-hydroxy benzoate to 2-octaprenylphenol, an intermediate step in ubiquinone biosynthesis. In Burkholderia pseudomallei (strain 1710b), this protein is 3-octaprenyl-4-hydroxybenzoate carboxy-lyase.